Reading from the N-terminus, the 909-residue chain is Lon protease homolog 2, peroxisomal (909 aa).

Residues 1-230 (MAPVRAPTAR…KVIELLDRQV (230 aa)) form the Lon N-terminal domain. Positions 249–269 (FPMDPDSTKPGKVKPPVKAPG) are disordered. 463–470 (GPPGVGKT) is a binding site for ATP. The 188-residue stretch at 706 to 893 (TSRPGIVTGL…WEAIRYVWPD (188 aa)) folds into the Lon proteolytic domain. Catalysis depends on residues S799 and K842. Residues 907 to 909 (SRL) carry the Microbody targeting signal motif.

It belongs to the peptidase S16 family.

The protein localises to the peroxisome matrix. It is found in the cytoplasm. The enzyme catalyses Hydrolysis of proteins in presence of ATP.. ATP-dependent serine protease that mediates the selective degradation of misfolded and unassembled polypeptides in the peroxisomal matrix. Necessary for type 2 peroxisome targeting signal (PTS2)-containing protein processing and facilitates peroxisome matrix protein import. The polypeptide is Lon protease homolog 2, peroxisomal (Sordaria macrospora (strain ATCC MYA-333 / DSM 997 / K(L3346) / K-hell)).